Here is a 194-residue protein sequence, read N- to C-terminus: GTP cyclohydrolase 1 (194 aa).

C85, H88, and C156 together coordinate Zn(2+).

It belongs to the GTP cyclohydrolase I family. As to quaternary structure, toroid-shaped homodecamer, composed of two pentamers of five dimers.

The catalysed reaction is GTP + H2O = 7,8-dihydroneopterin 3'-triphosphate + formate + H(+). It participates in cofactor biosynthesis; 7,8-dihydroneopterin triphosphate biosynthesis; 7,8-dihydroneopterin triphosphate from GTP: step 1/1. The polypeptide is GTP cyclohydrolase 1 (Bacteroides fragilis (strain YCH46)).